The following is a 359-amino-acid chain: Oplophorus-luciferin 2-monooxygenase non-catalytic subunit (359 aa).

The first 39 residues, 1 to 39 (MAVNFKFSLLTITIVVNILVYCNASAIKFDVDLEKVPSN), serve as a signal peptide directing secretion. LRR repeat units follow at residues 135–158 (AATL…EMSQ), 160–180 (TKLN…ALSS), 181–203 (DTLA…AFQT), 228–251 (SPKL…AIKL), 255–278 (GPTT…AVEG), 280–300 (QGIL…VWRP), 302–325 (LENL…MWLI), and 331–356 (LAKI…VFHA).

Heterotetramer of a catalytic 19 kDa and a non-catalytic 35 kDa subunit.

The protein localises to the secreted. Functionally, non-catalytic subunit of oplophorus-luciferin 2-monooxygenase. May stabilize the active conformation of the catalytic subunit. This Oplophorus gracilirostris (Luminous shrimp) protein is Oplophorus-luciferin 2-monooxygenase non-catalytic subunit.